Consider the following 264-residue polypeptide: 3-methyl-2-oxobutanoate hydroxymethyltransferase (264 aa).

Mg(2+) is bound by residues D45 and D84. 3-methyl-2-oxobutanoate is bound by residues 45 to 46, D84, and K112; that span reads DS. E114 provides a ligand contact to Mg(2+). E181 functions as the Proton acceptor in the catalytic mechanism.

Belongs to the PanB family. Homodecamer; pentamer of dimers. Mg(2+) serves as cofactor.

It is found in the cytoplasm. The enzyme catalyses 3-methyl-2-oxobutanoate + (6R)-5,10-methylene-5,6,7,8-tetrahydrofolate + H2O = 2-dehydropantoate + (6S)-5,6,7,8-tetrahydrofolate. The protein operates within cofactor biosynthesis; (R)-pantothenate biosynthesis; (R)-pantoate from 3-methyl-2-oxobutanoate: step 1/2. In terms of biological role, catalyzes the reversible reaction in which hydroxymethyl group from 5,10-methylenetetrahydrofolate is transferred onto alpha-ketoisovalerate to form ketopantoate. This is 3-methyl-2-oxobutanoate hydroxymethyltransferase from Escherichia coli O1:K1 / APEC.